The chain runs to 106 residues: MYAVLVTGGKQYRVVQGETLRVEKLDVETGSDVTFNSVLLMGSSDGIHVGEALKDASVTAKVVAHGRARKVRIIKFRRRKHHMKHQGHRQYYTEIQITGISGPAKQ.

The protein belongs to the bacterial ribosomal protein bL21 family. In terms of assembly, part of the 50S ribosomal subunit. Contacts protein L20.

This protein binds to 23S rRNA in the presence of protein L20. This is Large ribosomal subunit protein bL21 from Xylella fastidiosa (strain 9a5c).